We begin with the raw amino-acid sequence, 189 residues long: Protein GrpE (189 aa).

The segment at 1 to 37 is disordered; it reads MSDSSKEKKKKFADMVSRQKGDDQQSDNHKQTDDLNE. Over residues 17-33 the composition is skewed to basic and acidic residues; sequence SRQKGDDQQSDNHKQTD.

Belongs to the GrpE family. Homodimer.

The protein localises to the cytoplasm. Participates actively in the response to hyperosmotic and heat shock by preventing the aggregation of stress-denatured proteins, in association with DnaK and GrpE. It is the nucleotide exchange factor for DnaK and may function as a thermosensor. Unfolded proteins bind initially to DnaJ; upon interaction with the DnaJ-bound protein, DnaK hydrolyzes its bound ATP, resulting in the formation of a stable complex. GrpE releases ADP from DnaK; ATP binding to DnaK triggers the release of the substrate protein, thus completing the reaction cycle. Several rounds of ATP-dependent interactions between DnaJ, DnaK and GrpE are required for fully efficient folding. This is Protein GrpE from Wolbachia pipientis wMel.